A 318-amino-acid polypeptide reads, in one-letter code: uncharacterized protein (318 aa).

It belongs to the glycosyltransferase 2 family.

This is an uncharacterized protein from Rickettsia typhi (strain ATCC VR-144 / Wilmington).